Consider the following 496-residue polypeptide: Glycogen synthase (496 aa).

ADP-alpha-D-glucose is bound at residue lysine 15.

This sequence belongs to the glycosyltransferase 1 family. Bacterial/plant glycogen synthase subfamily.

The enzyme catalyses [(1-&gt;4)-alpha-D-glucosyl](n) + ADP-alpha-D-glucose = [(1-&gt;4)-alpha-D-glucosyl](n+1) + ADP + H(+). It participates in glycan biosynthesis; glycogen biosynthesis. In terms of biological role, synthesizes alpha-1,4-glucan chains using ADP-glucose. This Natranaerobius thermophilus (strain ATCC BAA-1301 / DSM 18059 / JW/NM-WN-LF) protein is Glycogen synthase.